The sequence spans 187 residues: Peptidyl-tRNA hydrolase (187 aa).

His-14 provides a ligand contact to tRNA. His-19 functions as the Proton acceptor in the catalytic mechanism. Residues Tyr-62, Asn-64, and Asn-110 each contribute to the tRNA site.

Belongs to the PTH family. As to quaternary structure, monomer.

It localises to the cytoplasm. It catalyses the reaction an N-acyl-L-alpha-aminoacyl-tRNA + H2O = an N-acyl-L-amino acid + a tRNA + H(+). In terms of biological role, hydrolyzes ribosome-free peptidyl-tRNAs (with 1 or more amino acids incorporated), which drop off the ribosome during protein synthesis, or as a result of ribosome stalling. Functionally, catalyzes the release of premature peptidyl moieties from peptidyl-tRNA molecules trapped in stalled 50S ribosomal subunits, and thus maintains levels of free tRNAs and 50S ribosomes. This is Peptidyl-tRNA hydrolase from Chlorobaculum tepidum (strain ATCC 49652 / DSM 12025 / NBRC 103806 / TLS) (Chlorobium tepidum).